The primary structure comprises 720 residues: Heat shock protein homolog pss1 (720 aa).

Ser38 bears the Phosphoserine mark. Thr39 is modified (phosphothreonine). Basic and acidic residues predominate over residues 658–690; that stretch reads KRQKVQAEREAAKAATKSEAEKQKPSGKFEEGT. The tract at residues 658–720 is disordered; sequence KRQKVQAERE…ETMEIDEQKE (63 aa). Acidic residues predominate over residues 703-720; sequence VAPENEEVETMEIDEQKE.

The protein belongs to the heat shock protein 70 family.

The protein localises to the cytoplasm. Functionally, required for normal growth at various temperatures. The protein is Heat shock protein homolog pss1 (pss1) of Schizosaccharomyces pombe (strain 972 / ATCC 24843) (Fission yeast).